Here is a 108-residue protein sequence, read N- to C-terminus: Peptidyl-prolyl cis-trans isomerase Fkbp12 (108 aa).

Residues 1-21 (MGVQVVPIAPGDGSTYPKNGQ) form a disordered region. One can recognise a PPIase FKBP-type domain in the interval 20–108 (GQKVTVHYTG…TFDVELLKVE (89 aa)).

The protein belongs to the FKBP-type PPIase family. FKBP1 subfamily.

The protein resides in the cytoplasm. It catalyses the reaction [protein]-peptidylproline (omega=180) = [protein]-peptidylproline (omega=0). In terms of biological role, PPIases accelerate the folding of proteins. It catalyzes the cis-trans isomerization of proline imidic peptide bonds in oligopeptides. Binds to ligand-free TGF beta type I receptor, from which it is released upon a ligand-induced, type II receptor mediated phosphorylation of the type I receptor. Binding is inhibitory to the signaling pathways of the TGF beta family ligands. The sequence is that of Peptidyl-prolyl cis-trans isomerase Fkbp12 from Drosophila melanogaster (Fruit fly).